We begin with the raw amino-acid sequence, 161 residues long: uncharacterized protein (161 aa).

Residues 1–35 (MVMAMGFDTVVAAIMATAIIVAVAYTFLAGSTSIA) form the signal peptide.

This is an uncharacterized protein from Archaeoglobus fulgidus (strain ATCC 49558 / DSM 4304 / JCM 9628 / NBRC 100126 / VC-16).